The following is a 456-amino-acid chain: Bifunctional protein GlmU (456 aa).

Positions 1-228 are pyrophosphorylase; the sequence is MPQNTLNIVI…SHLAAGVNNK (228 aa). UDP-N-acetyl-alpha-D-glucosamine contacts are provided by residues 11–14, Lys-25, Gln-75, 80–81, 102–104, Gly-138, Glu-153, Asn-168, and Asn-226; these read LAAG, GT, and YGD. A Mg(2+)-binding site is contributed by Asp-104. Asn-226 contributes to the Mg(2+) binding site. The tract at residues 229 to 249 is linker; the sequence is LQLTELERIFQTEQAQELLKA. The N-acetyltransferase stretch occupies residues 250–456; the sequence is GVTLRDPARF…GWVRPEKDKQ (207 aa). Residues Arg-332 and Lys-350 each contribute to the UDP-N-acetyl-alpha-D-glucosamine site. His-362 serves as the catalytic Proton acceptor. UDP-N-acetyl-alpha-D-glucosamine contacts are provided by Tyr-365 and Asn-376. Acetyl-CoA is bound by residues Ala-379, 385 to 386, Ser-404, Ala-422, and Arg-439; that span reads NY.

The protein in the N-terminal section; belongs to the N-acetylglucosamine-1-phosphate uridyltransferase family. It in the C-terminal section; belongs to the transferase hexapeptide repeat family. In terms of assembly, homotrimer. The cofactor is Mg(2+).

It localises to the cytoplasm. It catalyses the reaction alpha-D-glucosamine 1-phosphate + acetyl-CoA = N-acetyl-alpha-D-glucosamine 1-phosphate + CoA + H(+). It carries out the reaction N-acetyl-alpha-D-glucosamine 1-phosphate + UTP + H(+) = UDP-N-acetyl-alpha-D-glucosamine + diphosphate. It participates in nucleotide-sugar biosynthesis; UDP-N-acetyl-alpha-D-glucosamine biosynthesis; N-acetyl-alpha-D-glucosamine 1-phosphate from alpha-D-glucosamine 6-phosphate (route II): step 2/2. The protein operates within nucleotide-sugar biosynthesis; UDP-N-acetyl-alpha-D-glucosamine biosynthesis; UDP-N-acetyl-alpha-D-glucosamine from N-acetyl-alpha-D-glucosamine 1-phosphate: step 1/1. It functions in the pathway bacterial outer membrane biogenesis; LPS lipid A biosynthesis. Its function is as follows. Catalyzes the last two sequential reactions in the de novo biosynthetic pathway for UDP-N-acetylglucosamine (UDP-GlcNAc). The C-terminal domain catalyzes the transfer of acetyl group from acetyl coenzyme A to glucosamine-1-phosphate (GlcN-1-P) to produce N-acetylglucosamine-1-phosphate (GlcNAc-1-P), which is converted into UDP-GlcNAc by the transfer of uridine 5-monophosphate (from uridine 5-triphosphate), a reaction catalyzed by the N-terminal domain. In Neisseria meningitidis serogroup B (strain ATCC BAA-335 / MC58), this protein is Bifunctional protein GlmU.